We begin with the raw amino-acid sequence, 452 residues long: Protein disulfide-isomerase TMX3 (452 aa).

The signal sequence occupies residues 1–26 (MAAAGLCFILAIVSSTSLLASVPVSA). Positions 27 to 128 (LVEDLDDSFK…KEDIVEFANR (102 aa)) constitute a Thioredoxin domain. Residues 27 to 375 (LVEDLDDSFK…TVVSVFKSSP (349 aa)) are Lumenal-facing. Residues Cys-53 and Cys-56 each act as nucleophile in the active site. Cys-53 and Cys-56 are oxidised to a cystine. 2 N-linked (GlcNAc...) asparagine glycosylation sites follow: Asn-258 and Asn-313. The chain crosses the membrane as a helical span at residues 376 to 396 (LLGCFLFGLPLGVISIMCYGI). The Cytoplasmic portion of the chain corresponds to 397–452 (CTADTEDGSEEMTRKDVIDQNASDEGSDEEEEKGREITDVSDEDQQEKDFMEKKID). The interval 405–452 (SEEMTRKDVIDQNASDEGSDEEEEKGREITDVSDEDQQEKDFMEKKID) is disordered. Positions 443–452 (EKDFMEKKID) are enriched in basic and acidic residues. The short motif at 449-452 (KKID) is the Di-lysine motif element.

This sequence belongs to the protein disulfide isomerase family.

It localises to the endoplasmic reticulum membrane. It carries out the reaction Catalyzes the rearrangement of -S-S- bonds in proteins.. Functionally, probable disulfide isomerase, which participates in the folding of proteins containing disulfide bonds. May act as a dithiol oxidase. Acts as a regulator of endoplasmic reticulum-mitochondria contact sites via its ability to regulate redox signals. The chain is Protein disulfide-isomerase TMX3 (tmx3) from Xenopus laevis (African clawed frog).